An 808-amino-acid chain; its full sequence is Protein translocase subunit SecA (808 aa).

ATP-binding positions include Gln-87, 105-109 (GEGKT), and Asp-493.

It belongs to the SecA family. In terms of assembly, monomer and homodimer. Part of the essential Sec protein translocation apparatus which comprises SecA, SecYEG and auxiliary proteins SecDF. Other proteins may also be involved.

It is found in the cell membrane. It localises to the cytoplasm. It catalyses the reaction ATP + H2O + cellular proteinSide 1 = ADP + phosphate + cellular proteinSide 2.. In terms of biological role, part of the Sec protein translocase complex. Interacts with the SecYEG preprotein conducting channel. Has a central role in coupling the hydrolysis of ATP to the transfer of proteins into and across the cell membrane, serving as an ATP-driven molecular motor driving the stepwise translocation of polypeptide chains across the membrane. The protein is Protein translocase subunit SecA of Mycoplasma pneumoniae (strain ATCC 29342 / M129 / Subtype 1) (Mycoplasmoides pneumoniae).